Here is a 156-residue protein sequence, read N- to C-terminus: Arginine repressor (156 aa).

This sequence belongs to the ArgR family.

It localises to the cytoplasm. It participates in amino-acid biosynthesis; L-arginine biosynthesis [regulation]. In terms of biological role, regulates arginine biosynthesis genes. In Aeromonas hydrophila subsp. hydrophila (strain ATCC 7966 / DSM 30187 / BCRC 13018 / CCUG 14551 / JCM 1027 / KCTC 2358 / NCIMB 9240 / NCTC 8049), this protein is Arginine repressor.